Consider the following 272-residue polypeptide: 3-methyl-2-oxobutanoate hydroxymethyltransferase (272 aa).

Mg(2+) is bound by residues aspartate 43 and aspartate 82. 3-methyl-2-oxobutanoate is bound by residues 43–44 (DS), aspartate 82, and lysine 112. Glutamate 114 lines the Mg(2+) pocket. The active-site Proton acceptor is glutamate 179.

The protein belongs to the PanB family. Homodecamer; pentamer of dimers. Mg(2+) is required as a cofactor.

It is found in the cytoplasm. It catalyses the reaction 3-methyl-2-oxobutanoate + (6R)-5,10-methylene-5,6,7,8-tetrahydrofolate + H2O = 2-dehydropantoate + (6S)-5,6,7,8-tetrahydrofolate. Its pathway is cofactor biosynthesis; (R)-pantothenate biosynthesis; (R)-pantoate from 3-methyl-2-oxobutanoate: step 1/2. Functionally, catalyzes the reversible reaction in which hydroxymethyl group from 5,10-methylenetetrahydrofolate is transferred onto alpha-ketoisovalerate to form ketopantoate. This chain is 3-methyl-2-oxobutanoate hydroxymethyltransferase, found in Staphylococcus aureus (strain Newman).